We begin with the raw amino-acid sequence, 192 residues long: Cytochrome b-245 light chain (192 aa).

The Cytoplasmic portion of the chain corresponds to 2 to 7; the sequence is GQIEWA. Residues 8–30 traverse the membrane as a helical segment; it reads MWANEQALASGLILITGGIVATA. The Extracellular segment spans residues 31-35; the sequence is GRFTQ. Residues 36 to 53 traverse the membrane as a helical segment; that stretch reads WYFGAYSIVAGVLICLLE. At 54–69 the chain is on the cytoplasmic side; it reads YPRGKRKKGSTMERCG. The stretch at 70–80 is an intramembrane region; sequence QKYLTAVVKLF. Over 81-86 the chain is Cytoplasmic; sequence GPLTRN. A helical membrane pass occupies residues 87 to 104; that stretch reads YYVRAVLHLLLSVPAGFL. Leucine 105 is a topological domain (extracellular). A helical transmembrane segment spans residues 106-126; the sequence is ATILGTVCLAIASVIYLLAAI. The Cytoplasmic portion of the chain corresponds to 127–192; it reads RGEQWTPIEP…NPIPVTDEVV (66 aa). Residues 134 to 192 form a disordered region; it reads IEPKPKERPQVGGTIKQPPTNPPPRPPAEVRKKPSEAEEEAASAGGPQVNPIPVTDEVV. At threonine 147 the chain carries Phosphothreonine. A Glycyl lysine isopeptide (Lys-Gly) (interchain with G-Cter in ubiquitin) cross-link involves residue lysine 149. A phosphoserine mark is found at serine 168 and serine 176.

This sequence belongs to the p22phox family. As to quaternary structure, component of the phagocyte NADPH oxidase core complex/cytochrome b558 complex, composed of CYBB (heavy chain (beta)) and CYBA (light chain (alpha)). Component of the phagocyte NADPH oxidase complex composed of an obligatory core heterodimer formed by the membrane proteins CYBA and CYBB and the cytosolic regulatory subunits NCF1/p47-phox, NCF2/p67-phox, NCF4/p40-phox and the small GTPase RAC1 or RAC2. Interacts with NCF1 (via SH3 domain). Interacts with SH3PXD2A. Interacts with DUOX1, DUOX2 and TPO. Interacts with NOX4; this interaction mediates superoxide generation. Interacts with calprotectin (S100A8/9). Interacts with GBP7. Interacts with NOXO1. Forms a heterodimer with NOX3 and is essential for activity and cell membrane localization of NOX3. Interacts with NOX1. Post-translationally, phosphorylation at Thr-147 enhances NADPH oxidase activity by promoting NCF1/p47-phox binding. In terms of processing, ubiquitinated at Lys-149 likely by RNF145. Expressed to a relatively high level in kidney, spleen, thymus and lung, and to a lower level in aorta, adrenals, and heart. Expression is not detected in liver or brain.

It is found in the cell membrane. Subunit of NADPH oxidase complexes that is required for the NADPH oxidase activity that generates, in various cell types, superoxide from molecular oxygen utilizing NADPH as an electron donor. Subunit of the phagocyte NADPH oxidase complex that mediates the transfer of electrons from cytosolic NADPH to O2 to produce the superoxide anion (O2(-)). In the activated complex, electrons are first transferred from NADPH to flavin adenine dinucleotide (FAD) and subsequently transferred via two heme molecules to molecular oxygen, producing superoxide through an outer-sphere reaction. Activation of the NADPH oxidase complex is initiated by the assembly of cytosolic subunits of the NADPH oxidase complex with the core NADPH oxidase complex to form a complex at the plasma membrane or phagosomal membrane. This activation process is initiated by phosphorylation dependent binding of the cytosolic NCF1/p47-phox subunit to the C-terminus of CYBA/p22-phox. Aassociates with NOX3 to form a functional NADPH oxidase constitutively generating superoxide. The polypeptide is Cytochrome b-245 light chain (Rattus norvegicus (Rat)).